We begin with the raw amino-acid sequence, 393 residues long: NAD(P)H-quinone oxidoreductase subunit H, chloroplastic (393 aa).

Belongs to the complex I 49 kDa subunit family. In terms of assembly, NDH is composed of at least 16 different subunits, 5 of which are encoded in the nucleus.

It is found in the plastid. The protein resides in the chloroplast thylakoid membrane. The enzyme catalyses a plastoquinone + NADH + (n+1) H(+)(in) = a plastoquinol + NAD(+) + n H(+)(out). It carries out the reaction a plastoquinone + NADPH + (n+1) H(+)(in) = a plastoquinol + NADP(+) + n H(+)(out). NDH shuttles electrons from NAD(P)H:plastoquinone, via FMN and iron-sulfur (Fe-S) centers, to quinones in the photosynthetic chain and possibly in a chloroplast respiratory chain. The immediate electron acceptor for the enzyme in this species is believed to be plastoquinone. Couples the redox reaction to proton translocation, and thus conserves the redox energy in a proton gradient. The polypeptide is NAD(P)H-quinone oxidoreductase subunit H, chloroplastic (Solanum lycopersicum (Tomato)).